Here is a 1129-residue protein sequence, read N- to C-terminus: Protein DWARF 53-LIKE (1129 aa).

The 173-residue stretch at 8 to 180 (ARQCLSPAAV…KLAILRPAPP (173 aa)) folds into the Clp R domain. 2 repeat regions span residues 12 to 85 (LSPA…LDRL) and 102 to 180 (VSNS…PAPP). Residues 519 to 573 (RYIGVPADKERSANPSKGSESIGVQKDVIKPCAVSAVHSSSTARPISSPSVTNKR) are disordered. A compositionally biased stretch (low complexity) spans 557-568 (SSSTARPISSPS). The EAR 1 signature appears at 577–581 (LVLNL). The interval 587–654 (KSDENLQERG…KRVEDSERSV (68 aa)) is disordered. Polar residues predominate over residues 596–608 (GMQSQHGTLSNAD). Over residues 645 to 654 (KRVEDSERSV) the composition is skewed to basic and acidic residues. Short sequence motifs (EAR) lie at residues 798-802 (LDLNL) and 975-980 (FDLNLP). Positions 975–1001 (FDLNLPVDEDEPFDADDDSSSHENSYG) are disordered. Residues 981-992 (VDEDEPFDADDD) are compositionally biased toward acidic residues.

It belongs to the ClpA/ClpB family. Post-translationally, polyubiquitinated. Strigolactone, but not karrikin, triggers rapid SCF(D3)-dependent degradation via the proteasome.

Functionally, repressor of strigolactones (SL) signaling. Subjected to a negative feedback control of SL signaling. This is Protein DWARF 53-LIKE from Oryza sativa subsp. japonica (Rice).